A 188-amino-acid chain; its full sequence is Elongation factor P (188 aa).

At K34 the chain carries N6-(3,6-diaminohexanoyl)-5-hydroxylysine.

This sequence belongs to the elongation factor P family. In terms of processing, may be beta-lysylated on the epsilon-amino group of Lys-34 by the combined action of EpmA and EpmB, and then hydroxylated on the C5 position of the same residue by EpmC (if this protein is present). Lysylation is critical for the stimulatory effect of EF-P on peptide-bond formation. The lysylation moiety may extend toward the peptidyltransferase center and stabilize the terminal 3-CCA end of the tRNA. Hydroxylation of the C5 position on Lys-34 may allow additional potential stabilizing hydrogen-bond interactions with the P-tRNA.

It localises to the cytoplasm. It participates in protein biosynthesis; polypeptide chain elongation. Functionally, involved in peptide bond synthesis. Alleviates ribosome stalling that occurs when 3 or more consecutive Pro residues or the sequence PPG is present in a protein, possibly by augmenting the peptidyl transferase activity of the ribosome. Modification of Lys-34 is required for alleviation. The polypeptide is Elongation factor P (Aliivibrio fischeri (strain ATCC 700601 / ES114) (Vibrio fischeri)).